The sequence spans 671 residues: MESLIFIAPLAGVISLVFAAFFAKSILKEDAGNKRMKEIAGAIQEGAMAYLNRQYKTIAVVSIILSFLILFLLDDGLKIAIGFLAGAISSAAAGYIGMSVSVRANIRTAHAASSGLEKAMSVAFRGGAVTGLAVVGLALLGTSSFYILYGDVDLVVGFGFGASLISLFARVGGGIFTKAADVGADLVGKVEAGIPEDDPRNAGVIADNVGDNVGDCAGMGADLFETYVVTSLAAMLLGSLIIGTYENAILYPLVLGSVAIFASIISVFFVKIGKEGKIMQALYKGVGGSAIISLIAFYFVTNSLMGDIRLFYATVVGIIITVLMVIITEYYTSTDYRPVKTIAASSETGAATNIISGLSIGFESTLVPTVVIVIGILISYFIVGGAADAGIGLYGIAIAAVAMLSTTGMIVALDSYGPITDNAGGIAQMANLPAQVRKVTDALDAVGNTTKAVTKGYAIGSAALGALALFADYRSKVNLGGQSLNLDDPVVLAGLLLGALLPFVFSAVTMSAVGKAAFEVVNEVRRQFREIPGIMEGTAKPEYGRCVDIVTKAALHEMAMPGFLAVLVPLLVGLILGPKALAGLLIGLIVVGFMLALMMDNGGGAWDNAKKLIEDGNHGGRGSEAHKAAVVGDTVGDPFKDTAGPALNALIKVVNMVAILFSSLIIHSGLF.

5 helical membrane-spanning segments follow: residues 3-23 (SLIF…AFFA), 57-77 (TIAV…DDGL), 79-99 (IAIG…IGMS), 128-148 (AVTG…FYIL), and 156-176 (VGFG…GGIF). Residue lysine 178 coordinates substrate. Residues aspartate 181, aspartate 185, asparagine 208, and aspartate 211 each coordinate Mg(2+). A run of 6 helical transmembrane segments spans residues 223–243 (LFET…LIIG), 249–269 (ILYP…SVFF), 285–305 (GVGG…NSLM), 310–330 (LFYA…ITEY), 366–386 (LVPT…VGGA), and 391–411 (IGLY…GMIV). Residue aspartate 421 participates in Mg(2+) binding. 4 consecutive transmembrane segments (helical) span residues 452 to 472 (AVTK…LFAD), 490 to 510 (VVLA…AVTM), 558 to 578 (MAMP…ILGP), and 580 to 600 (ALAG…LMMD). Ca(2+)-binding residues include aspartate 607, aspartate 633, and aspartate 637. Lysine 640 contacts substrate. Residues 646 to 666 (ALNALIKVVNMVAILFSSLII) traverse the membrane as a helical segment.

The protein belongs to the H(+)-translocating pyrophosphatase (TC 3.A.10) family. K(+)-insensitive subfamily. Homodimer. The cofactor is Mg(2+).

It is found in the cell membrane. The enzyme catalyses diphosphate + H2O + H(+)(in) = 2 phosphate + 2 H(+)(out). Functionally, proton pump that utilizes the energy of pyrophosphate hydrolysis as the driving force for proton movement across the membrane. Generates a proton motive force. This is K(+)-insensitive pyrophosphate-energized proton pump from Methanosarcina acetivorans (strain ATCC 35395 / DSM 2834 / JCM 12185 / C2A).